The following is a 557-amino-acid chain: ABC1 family protein MCP2 homolog (557 aa).

Residues 1-33 (MFSRFSWPRITRCFRSYPKKKSSCISFTHHARE) constitute a mitochondrion transit peptide. At 34–39 (HTNFKK) the chain is on the mitochondrial matrix side. A helical membrane pass occupies residues 40–56 (PAVVGASITLMASVALV). The Mitochondrial intermembrane portion of the chain corresponds to 57 to 557 (DFDPVKHAGV…NYFYYKHMYL (501 aa)).

This sequence belongs to the protein kinase superfamily. ADCK protein kinase family.

The protein resides in the mitochondrion inner membrane. In terms of biological role, involved in mitochondrial lipid homeostasis. In Schizosaccharomyces pombe (strain 972 / ATCC 24843) (Fission yeast), this protein is ABC1 family protein MCP2 homolog.